The following is a 152-amino-acid chain: Small ribosomal subunit protein uS8m (152 aa).

It belongs to the universal ribosomal protein uS8 family.

The protein localises to the mitochondrion. This is Small ribosomal subunit protein uS8m (mrps8) from Dictyostelium citrinum (Slime mold).